Consider the following 76-residue polypeptide: Cytochrome c oxidase subunit 6C-1 (76 aa).

Topologically, residues Ser2–Gly10 are mitochondrial matrix. The helical transmembrane segment at Leu11–Lys51 threads the bilayer. Topologically, residues Gln52–Glu76 are mitochondrial intermembrane.

The protein belongs to the cytochrome c oxidase subunit 6c family. As to quaternary structure, component of the cytochrome c oxidase (complex IV, CIV), a multisubunit enzyme composed of 14 subunits. The complex is composed of a catalytic core of 3 subunits MT-CO1, MT-CO2 and MT-CO3, encoded in the mitochondrial DNA, and 11 supernumerary subunits COX4I, COX5A, COX5B, COX6A, COX6B, COX6C, COX7A, COX7B, COX7C, COX8 and NDUFA4, which are encoded in the nuclear genome. The complex exists as a monomer or a dimer and forms supercomplexes (SCs) in the inner mitochondrial membrane with NADH-ubiquinone oxidoreductase (complex I, CI) and ubiquinol-cytochrome c oxidoreductase (cytochrome b-c1 complex, complex III, CIII), resulting in different assemblies (supercomplex SCI(1)III(2)IV(1) and megacomplex MCI(2)III(2)IV(2)).

The protein localises to the mitochondrion inner membrane. The protein operates within energy metabolism; oxidative phosphorylation. Functionally, component of the cytochrome c oxidase, the last enzyme in the mitochondrial electron transport chain which drives oxidative phosphorylation. The respiratory chain contains 3 multisubunit complexes succinate dehydrogenase (complex II, CII), ubiquinol-cytochrome c oxidoreductase (cytochrome b-c1 complex, complex III, CIII) and cytochrome c oxidase (complex IV, CIV), that cooperate to transfer electrons derived from NADH and succinate to molecular oxygen, creating an electrochemical gradient over the inner membrane that drives transmembrane transport and the ATP synthase. Cytochrome c oxidase is the component of the respiratory chain that catalyzes the reduction of oxygen to water. Electrons originating from reduced cytochrome c in the intermembrane space (IMS) are transferred via the dinuclear copper A center (CU(A)) of subunit 2 and heme A of subunit 1 to the active site in subunit 1, a binuclear center (BNC) formed by heme A3 and copper B (CU(B)). The BNC reduces molecular oxygen to 2 water molecules using 4 electrons from cytochrome c in the IMS and 4 protons from the mitochondrial matrix. The polypeptide is Cytochrome c oxidase subunit 6C-1 (Thunnus obesus (Bigeye tuna)).